The chain runs to 253 residues: Ditrans,polycis-undecaprenyl-diphosphate synthase ((2E,6E)-farnesyl-diphosphate specific) (253 aa).

D25 is an active-site residue. Residue D25 coordinates Mg(2+). Substrate-binding positions include 26-29, W30, R38, H42, and 70-72; these read GNGR and SSE. N73 (proton acceptor) is an active-site residue. Positions 74, 76, and 193 each coordinate substrate. H198 contributes to the Mg(2+) binding site. 199–201 serves as a coordination point for substrate; the sequence is RIS. E212 provides a ligand contact to Mg(2+).

Belongs to the UPP synthase family. In terms of assembly, homodimer. The cofactor is Mg(2+).

It catalyses the reaction 8 isopentenyl diphosphate + (2E,6E)-farnesyl diphosphate = di-trans,octa-cis-undecaprenyl diphosphate + 8 diphosphate. Its function is as follows. Catalyzes the sequential condensation of isopentenyl diphosphate (IPP) with (2E,6E)-farnesyl diphosphate (E,E-FPP) to yield (2Z,6Z,10Z,14Z,18Z,22Z,26Z,30Z,34E,38E)-undecaprenyl diphosphate (di-trans,octa-cis-UPP). UPP is the precursor of glycosyl carrier lipid in the biosynthesis of bacterial cell wall polysaccharide components such as peptidoglycan and lipopolysaccharide. The sequence is that of Ditrans,polycis-undecaprenyl-diphosphate synthase ((2E,6E)-farnesyl-diphosphate specific) from Pectobacterium atrosepticum (strain SCRI 1043 / ATCC BAA-672) (Erwinia carotovora subsp. atroseptica).